Here is a 138-residue protein sequence, read N- to C-terminus: uncharacterized protein (138 aa).

This is an uncharacterized protein from Acanthamoeba polyphaga mimivirus (APMV).